Consider the following 177-residue polypeptide: MPRIWKFGDSVNTDDILPGKFAPFMAGEDVFQTFAFHYVRPEFAAQVQPGDVLIGGRNWGLGSSREYAPQALKKLHIGGIVAPSFARIHYRNLLNLGIPAFEYDLTELLEDGDEVTLDAQTGLLTYADGTVQLPPPPEFLREALKEGSILEFFKKHGRFPGEEPGAEASTETASAAE.

The interval 157–177 (GRFPGEEPGAEASTETASAAE) is disordered. Residues 162-177 (EEPGAEASTETASAAE) are compositionally biased toward low complexity.

Belongs to the LeuD family. LeuD type 2 subfamily. As to quaternary structure, heterodimer of LeuC and LeuD.

The enzyme catalyses (2R,3S)-3-isopropylmalate = (2S)-2-isopropylmalate. It participates in amino-acid biosynthesis; L-leucine biosynthesis; L-leucine from 3-methyl-2-oxobutanoate: step 2/4. Functionally, catalyzes the isomerization between 2-isopropylmalate and 3-isopropylmalate, via the formation of 2-isopropylmaleate. The sequence is that of 3-isopropylmalate dehydratase small subunit 1 (leuD1) from Deinococcus radiodurans (strain ATCC 13939 / DSM 20539 / JCM 16871 / CCUG 27074 / LMG 4051 / NBRC 15346 / NCIMB 9279 / VKM B-1422 / R1).